Consider the following 225-residue polypeptide: MGVIFENDWQELLKDEFEKEYYKKVRGFLVEEYRTKTIYPDKNHIFSALHYTAYKDVRVVILGQDPYHGPNQAHGLSFSVQPGVRIPPSLVNIYKELETDLGCYIPNHGYLKKWADQGVLLLNTSLTVRAGEANSHQKIGWEIFTDHIIQLLNDRKEPIVFILWGNNAISKERFITNPQHYIIKSVHPSPLSASRGFFGSKPFSKTNSFLESIGEKPIDWQIENR.

Catalysis depends on aspartate 65, which acts as the Proton acceptor.

This sequence belongs to the uracil-DNA glycosylase (UDG) superfamily. UNG family.

The protein resides in the cytoplasm. The catalysed reaction is Hydrolyzes single-stranded DNA or mismatched double-stranded DNA and polynucleotides, releasing free uracil.. Excises uracil residues from the DNA which can arise as a result of misincorporation of dUMP residues by DNA polymerase or due to deamination of cytosine. In Alkaliphilus oremlandii (strain OhILAs) (Clostridium oremlandii (strain OhILAs)), this protein is Uracil-DNA glycosylase.